Reading from the N-terminus, the 623-residue chain is E3 ubiquitin-protein ligase DTX1 (623 aa).

2 consecutive WWE domains span residues 13–93 and 94–170; these read HNFG…PVRR and NFFE…RLRR. The segment at 224-319 is disordered; sequence KVPSGPPPAL…RASIPPGVPA (96 aa). Residues 227–242 are compositionally biased toward pro residues; that stretch reads SGPPPALPPPPPPPIH. Residues 292–311 are compositionally biased toward polar residues; it reads GQNNLNRPGEQRTSGSSSRA. The segment at 413–474 adopts an RING-type zinc-finger fold; it reads CTICMERLVT…DGSLQCPTCK (62 aa).

It belongs to the Deltex family. As to quaternary structure, may form a homo- or heterodimer with other members of the Deltex family. Probably interacts with Notch1. Specifically expressed in regions undergoing neuronal differentiation. Mainly colocalizes with Notch1.

It carries out the reaction S-ubiquitinyl-[E2 ubiquitin-conjugating enzyme]-L-cysteine + [acceptor protein]-L-lysine = [E2 ubiquitin-conjugating enzyme]-L-cysteine + N(6)-ubiquitinyl-[acceptor protein]-L-lysine.. It functions in the pathway protein modification; protein ubiquitination. Its function is as follows. Regulator of Notch signaling, a signaling pathway involved in cell-cell communications that regulates a broad spectrum of cell-fate determinations. Probably acts both as a positive and negative regulator of Notch, depending on the developmental and cell context. Functions as a ubiquitin ligase protein in vivo, mediating ubiquitination and promoting degradation of MEKK1, suggesting that it may regulate the Notch pathway via some ubiquitin ligase activity. This Xenopus laevis (African clawed frog) protein is E3 ubiquitin-protein ligase DTX1 (dtx1).